The following is a 388-amino-acid chain: Succinate--CoA ligase [ADP-forming] subunit beta (388 aa).

Residues 9–244 (KQLFARYGLP…QSQEDPREAQ (236 aa)) enclose the ATP-grasp domain. Residues K46, 53–55 (GRG), E99, T102, and E107 contribute to the ATP site. Residues N199 and D213 each contribute to the Mg(2+) site. Substrate-binding positions include N264 and 321–323 (GIV).

This sequence belongs to the succinate/malate CoA ligase beta subunit family. As to quaternary structure, heterotetramer of two alpha and two beta subunits. The cofactor is Mg(2+).

It carries out the reaction succinate + ATP + CoA = succinyl-CoA + ADP + phosphate. It catalyses the reaction GTP + succinate + CoA = succinyl-CoA + GDP + phosphate. Its pathway is carbohydrate metabolism; tricarboxylic acid cycle; succinate from succinyl-CoA (ligase route): step 1/1. Functionally, succinyl-CoA synthetase functions in the citric acid cycle (TCA), coupling the hydrolysis of succinyl-CoA to the synthesis of either ATP or GTP and thus represents the only step of substrate-level phosphorylation in the TCA. The beta subunit provides nucleotide specificity of the enzyme and binds the substrate succinate, while the binding sites for coenzyme A and phosphate are found in the alpha subunit. This is Succinate--CoA ligase [ADP-forming] subunit beta from Escherichia coli O8 (strain IAI1).